We begin with the raw amino-acid sequence, 394 residues long: Formate-dependent phosphoribosylglycinamide formyltransferase (394 aa).

N(1)-(5-phospho-beta-D-ribosyl)glycinamide contacts are provided by residues glutamate 22–leucine 23 and glutamate 82. ATP is bound by residues arginine 114, lysine 155, serine 160 to glutamine 165, glutamate 195 to valine 198, and glutamate 203. The ATP-grasp domain maps to arginine 119 to leucine 308. Mg(2+)-binding residues include glutamate 267 and glutamate 279. N(1)-(5-phospho-beta-D-ribosyl)glycinamide is bound by residues aspartate 286, lysine 357, and arginine 364–arginine 365.

Belongs to the PurK/PurT family. As to quaternary structure, homodimer.

The enzyme catalyses N(1)-(5-phospho-beta-D-ribosyl)glycinamide + formate + ATP = N(2)-formyl-N(1)-(5-phospho-beta-D-ribosyl)glycinamide + ADP + phosphate + H(+). Its pathway is purine metabolism; IMP biosynthesis via de novo pathway; N(2)-formyl-N(1)-(5-phospho-D-ribosyl)glycinamide from N(1)-(5-phospho-D-ribosyl)glycinamide (formate route): step 1/1. Its function is as follows. Involved in the de novo purine biosynthesis. Catalyzes the transfer of formate to 5-phospho-ribosyl-glycinamide (GAR), producing 5-phospho-ribosyl-N-formylglycinamide (FGAR). Formate is provided by PurU via hydrolysis of 10-formyl-tetrahydrofolate. This is Formate-dependent phosphoribosylglycinamide formyltransferase from Tolumonas auensis (strain DSM 9187 / NBRC 110442 / TA 4).